We begin with the raw amino-acid sequence, 129 residues long: Small ribosomal subunit protein uS11 (129 aa).

This sequence belongs to the universal ribosomal protein uS11 family. As to quaternary structure, part of the 30S ribosomal subunit. Interacts with proteins S7 and S18. Binds to IF-3.

Located on the platform of the 30S subunit, it bridges several disparate RNA helices of the 16S rRNA. Forms part of the Shine-Dalgarno cleft in the 70S ribosome. This chain is Small ribosomal subunit protein uS11, found in Escherichia fergusonii (strain ATCC 35469 / DSM 13698 / CCUG 18766 / IAM 14443 / JCM 21226 / LMG 7866 / NBRC 102419 / NCTC 12128 / CDC 0568-73).